A 127-amino-acid polypeptide reads, in one-letter code: Transcription antitermination protein NusB (127 aa).

This sequence belongs to the NusB family.

In terms of biological role, involved in transcription antitermination. Required for transcription of ribosomal RNA (rRNA) genes. Binds specifically to the boxA antiterminator sequence of the ribosomal RNA (rrn) operons. The chain is Transcription antitermination protein NusB from Lysinibacillus sphaericus (strain C3-41).